We begin with the raw amino-acid sequence, 198 residues long: ATP-dependent Clp protease proteolytic subunit 1 (198 aa).

Serine 98 functions as the Nucleophile in the catalytic mechanism. Residue histidine 123 is part of the active site.

This sequence belongs to the peptidase S14 family. As to quaternary structure, fourteen ClpP subunits assemble into 2 heptameric rings which stack back to back to give a disk-like structure with a central cavity, resembling the structure of eukaryotic proteasomes.

Its subcellular location is the cytoplasm. It catalyses the reaction Hydrolysis of proteins to small peptides in the presence of ATP and magnesium. alpha-casein is the usual test substrate. In the absence of ATP, only oligopeptides shorter than five residues are hydrolyzed (such as succinyl-Leu-Tyr-|-NHMec, and Leu-Tyr-Leu-|-Tyr-Trp, in which cleavage of the -Tyr-|-Leu- and -Tyr-|-Trp bonds also occurs).. Cleaves peptides in various proteins in a process that requires ATP hydrolysis. Has a chymotrypsin-like activity. Plays a major role in the degradation of misfolded proteins. This is ATP-dependent Clp protease proteolytic subunit 1 from Leptospira interrogans serogroup Icterohaemorrhagiae serovar copenhageni (strain Fiocruz L1-130).